Reading from the N-terminus, the 331-residue chain is MTIAVLGGAGYIGSHTVKQLLAAGEDVVVLDNLITGHRKAVDPRARFYQGDIRDYHFLSQVFSQEKIDGIVHFAAFSIVPESMKDPLKYFDNNTGGMITLLEAMNQFGIKKIVFSSTAATYGEPKQVPIKETDPQVPTNPYGESKLAMEKIMHWADVAYGLKFVALRYFNVAGAMPDGSIGEDHHPETHIVPIILQVAAGTRTGLQIYGDDYPTKDGTNVRDYVHVVDLADAHILALKYLDAGNKSSAFNIGSAHGFSNLEILNAARKVTGQEIPATMGPRRAGDPSTLIASSEKARDILGWKPNYDDIDKIIETAWNWHENHPEGFGDRN.

Residues Tyr-11–Ile-12, Asp-31–Gly-36, Asp-51–Ile-52, Phe-73–Ser-77, Asn-92, Thr-117, Tyr-141, Lys-145, and Phe-169 each bind NAD(+). The substrate site is built by Thr-117 and Tyr-141. Catalysis depends on Tyr-141, which acts as the Proton acceptor. Substrate-binding positions include Asn-170, His-189–Ile-190, Gln-206–Tyr-208, Arg-221, and Arg-282–Asp-285.

It belongs to the NAD(P)-dependent epimerase/dehydratase family. Homodimer. NAD(+) serves as cofactor.

It catalyses the reaction UDP-alpha-D-glucose = UDP-alpha-D-galactose. Its pathway is carbohydrate metabolism; galactose metabolism. In Lacticaseibacillus casei (Lactobacillus casei), this protein is UDP-glucose 4-epimerase (galE).